Consider the following 225-residue polypeptide: Thymocyte nuclear protein 1 (225 aa).

The tract at residues 1 to 47 is disordered; sequence MSRPRKRLAGTSGSDKGLSGKRTKTENSGEALAKVEDSNPQKTSATK. Positions 5–10 match the Nuclear localization signal motif; that stretch reads RKRLAG. Over residues 23 to 39 the composition is skewed to basic and acidic residues; it reads TKTENSGEALAKVEDSN.

In terms of processing, phosphorylated.

The protein resides in the nucleus. Its function is as follows. Specifically binds 5-hydroxymethylcytosine (5hmC), suggesting that it acts as a specific reader of 5hmC. The chain is Thymocyte nuclear protein 1 (THYN1) from Homo sapiens (Human).